The chain runs to 853 residues: DNA mismatch repair protein MutS (853 aa).

614–621 serves as a coordination point for ATP; it reads GPNMGGKS.

Belongs to the DNA mismatch repair MutS family.

In terms of biological role, this protein is involved in the repair of mismatches in DNA. It is possible that it carries out the mismatch recognition step. This protein has a weak ATPase activity. This chain is DNA mismatch repair protein MutS, found in Cronobacter sakazakii (strain ATCC BAA-894) (Enterobacter sakazakii).